Here is a 529-residue protein sequence, read N- to C-terminus: uncharacterized protein (529 aa).

Residues 1-20 (MGADLKQPQDADSPPKGVSR) are disordered. Positions 1-52 (MGADLKQPQDADSPPKGVSRRRFLTTGAAAVVGTGVGAGGTALLSSHPRGPA) form a signal peptide, tat-type signal.

Post-translationally, predicted to be exported by the Tat system. The position of the signal peptide cleavage has not been experimentally proven.

This is an uncharacterized protein from Mycobacterium tuberculosis (strain CDC 1551 / Oshkosh).